A 907-amino-acid chain; its full sequence is Putative ATP-dependent DNA helicase DDX11-like protein 8 (907 aa).

The 439-residue stretch at 9 to 447 (GAIHFPFPFT…KNLMYLKQIL (439 aa)) folds into the Helicase ATP-binding domain. Residue 44–51 (SPTGTGKS) participates in ATP binding. Residues 202–222 (YESDEEKKVASGHRVDEDEDD) are disordered. Residues 206 to 217 (EEKKVASGHRVD) are compositionally biased toward basic and acidic residues. S264 carries the phosphoserine modification. Residues C269 and C287 each contribute to the [4Fe-4S] cluster site. Basic and acidic residues predominate over residues 291–306 (QRSRHEKKKGAEEEKP). The tract at residues 291–314 (QRSRHEKKKGAEEEKPKRRRQEKQ) is disordered. Residues C317 and C352 each contribute to the [4Fe-4S] cluster site. Residues 395–398 (DEAH) carry the DEAH motif.

This sequence belongs to the DEAD box helicase family. DEAH subfamily. DDX11/CHL1 sub-subfamily. It depends on [4Fe-4S] cluster as a cofactor.

It localises to the nucleus. Its subcellular location is the nucleolus. Its function is as follows. Putative DNA helicase. The chain is Putative ATP-dependent DNA helicase DDX11-like protein 8 (DDX11L8) from Homo sapiens (Human).